We begin with the raw amino-acid sequence, 713 residues long: Glycine--tRNA ligase beta subunit (713 aa).

It belongs to the class-II aminoacyl-tRNA synthetase family. Tetramer of two alpha and two beta subunits.

The protein localises to the cytoplasm. It catalyses the reaction tRNA(Gly) + glycine + ATP = glycyl-tRNA(Gly) + AMP + diphosphate. The protein is Glycine--tRNA ligase beta subunit of Picosynechococcus sp. (strain ATCC 27264 / PCC 7002 / PR-6) (Agmenellum quadruplicatum).